Here is a 135-residue protein sequence, read N- to C-terminus: Small ribosomal subunit protein uS12 (135 aa).

3-methylthioaspartic acid is present on aspartate 89. A disordered region spans residues arginine 114–lysine 135. Residues alanine 124–lysine 135 show a composition bias toward low complexity.

It belongs to the universal ribosomal protein uS12 family. Part of the 30S ribosomal subunit. Contacts proteins S8 and S17. May interact with IF1 in the 30S initiation complex.

Its function is as follows. With S4 and S5 plays an important role in translational accuracy. Interacts with and stabilizes bases of the 16S rRNA that are involved in tRNA selection in the A site and with the mRNA backbone. Located at the interface of the 30S and 50S subunits, it traverses the body of the 30S subunit contacting proteins on the other side and probably holding the rRNA structure together. The combined cluster of proteins S8, S12 and S17 appears to hold together the shoulder and platform of the 30S subunit. The sequence is that of Small ribosomal subunit protein uS12 from Amoebophilus asiaticus (strain 5a2).